A 20-amino-acid chain; its full sequence is Cytochrome c oxidase subunit 7B-liver, mitochondrial (20 aa).

It belongs to the cytochrome c oxidase VIIb family. In terms of assembly, component of the cytochrome c oxidase (complex IV, CIV), a multisubunit enzyme composed of 14 subunits. The complex is composed of a catalytic core of 3 subunits MT-CO1, MT-CO2 and MT-CO3, encoded in the mitochondrial DNA, and 11 supernumerary subunits COX4I, COX5A, COX5B, COX6A, COX6B, COX6C, COX7A, COX7B, COX7C, COX8 and NDUFA4, which are encoded in the nuclear genome. The complex exists as a monomer or a dimer and forms supercomplexes (SCs) in the inner mitochondrial membrane with NADH-ubiquinone oxidoreductase (complex I, CI) and ubiquinol-cytochrome c oxidoreductase (cytochrome b-c1 complex, complex III, CIII), resulting in different assemblies (supercomplex SCI(1)III(2)IV(1) and megacomplex MCI(2)III(2)IV(2)).

The protein resides in the mitochondrion inner membrane. It catalyses the reaction 4 Fe(II)-[cytochrome c] + O2 + 8 H(+)(in) = 4 Fe(III)-[cytochrome c] + 2 H2O + 4 H(+)(out). The protein operates within energy metabolism; oxidative phosphorylation. Functionally, component of the cytochrome c oxidase, the last enzyme in the mitochondrial electron transport chain which drives oxidative phosphorylation. The respiratory chain contains 3 multisubunit complexes succinate dehydrogenase (complex II, CII), ubiquinol-cytochrome c oxidoreductase (cytochrome b-c1 complex, complex III, CIII) and cytochrome c oxidase (complex IV, CIV), that cooperate to transfer electrons derived from NADH and succinate to molecular oxygen, creating an electrochemical gradient over the inner membrane that drives transmembrane transport and the ATP synthase. Cytochrome c oxidase is the component of the respiratory chain that catalyzes the reduction of oxygen to water. Electrons originating from reduced cytochrome c in the intermembrane space (IMS) are transferred via the dinuclear copper A center (CU(A)) of subunit 2 and heme A of subunit 1 to the active site in subunit 1, a binuclear center (BNC) formed by heme A3 and copper B (CU(B)). The BNC reduces molecular oxygen to 2 water molecules using 4 electrons from cytochrome c in the IMS and 4 protons from the mitochondrial matrix. The protein is Cytochrome c oxidase subunit 7B-liver, mitochondrial of Thunnus obesus (Bigeye tuna).